Here is a 171-residue protein sequence, read N- to C-terminus: UPF0763 protein Hac_0849 (171 aa).

This sequence belongs to the UPF0763 family.

The sequence is that of UPF0763 protein Hac_0849 from Helicobacter acinonychis (strain Sheeba).